The following is a 277-amino-acid chain: 3-methyl-2-oxobutanoate hydroxymethyltransferase (277 aa).

The Mg(2+) site is built by Asp53 and Asp96. 3-methyl-2-oxobutanoate is bound by residues 53 to 54 (DS), Asp96, and Lys126. Glu128 is a binding site for Mg(2+). Glu195 (proton acceptor) is an active-site residue.

Belongs to the PanB family. In terms of assembly, homodecamer; pentamer of dimers. Mg(2+) serves as cofactor.

Its subcellular location is the cytoplasm. It carries out the reaction 3-methyl-2-oxobutanoate + (6R)-5,10-methylene-5,6,7,8-tetrahydrofolate + H2O = 2-dehydropantoate + (6S)-5,6,7,8-tetrahydrofolate. It participates in cofactor biosynthesis; (R)-pantothenate biosynthesis; (R)-pantoate from 3-methyl-2-oxobutanoate: step 1/2. Catalyzes the reversible reaction in which hydroxymethyl group from 5,10-methylenetetrahydrofolate is transferred onto alpha-ketoisovalerate to form ketopantoate. The chain is 3-methyl-2-oxobutanoate hydroxymethyltransferase from Chlorobium phaeobacteroides (strain DSM 266 / SMG 266 / 2430).